The primary structure comprises 191 residues: DNA-directed RNA polymerase subunit Rpo3 (191 aa).

It belongs to the archaeal Rpo3/eukaryotic RPB3 RNA polymerase subunit family. In terms of assembly, part of the RNA polymerase complex. Interacts with Rpo12. Forms an Rpo3-Rpo10-Rpo11-Rpo12 complex upon coexpression.

It is found in the cytoplasm. The catalysed reaction is RNA(n) + a ribonucleoside 5'-triphosphate = RNA(n+1) + diphosphate. DNA-dependent RNA polymerase (RNAP) catalyzes the transcription of DNA into RNA using the four ribonucleoside triphosphates as substrates. The polypeptide is DNA-directed RNA polymerase subunit Rpo3 (Methanocaldococcus jannaschii (strain ATCC 43067 / DSM 2661 / JAL-1 / JCM 10045 / NBRC 100440) (Methanococcus jannaschii)).